Reading from the N-terminus, the 258-residue chain is MEGKEEDVRLGANKFTERQPIGTAAQSQDKDYKEPPPAPLFEPGELSSWSFYRAGIAEFVATFLFLYITILTVMGVVKSSTKCSTVGIQGIAWAFGGMIFALVYCTAGISGGHINPAVTFGLFLARKLSLTRALFYMVMQCLGAICGAGVVKGFQKGLYENNGGGANVVAPGYTKGDGLGAEIVGTFILVYTVFSATDAKRSARDSHVPILAPLPIGFAVFLVHLATIPITGTGINPARSLGAAIIYNKGHAWDDHWI.

The tract at residues 1-37 (MEGKEEDVRLGANKFTERQPIGTAAQSQDKDYKEPPP) is disordered. Over 1–55 (MEGKEEDVRLGANKFTERQPIGTAAQSQDKDYKEPPPAPLFEPGELSSWSFYRAG) the chain is Cytoplasmic. Residues 56 to 76 (IAEFVATFLFLYITILTVMGV) form a helical membrane-spanning segment. Residues 77–89 (VKSSTKCSTVGIQ) are Extracellular-facing. The helical transmembrane segment at 90–110 (GIAWAFGGMIFALVYCTAGIS) threads the bilayer. Residues 111-133 (GGHINPAVTFGLFLARKLSLTRA) are Cytoplasmic-facing. The NPA 1 signature appears at 115–117 (NPA). The helical transmembrane segment at 134-154 (LFYMVMQCLGAICGAGVVKGF) threads the bilayer. The Extracellular segment spans residues 155 to 175 (QKGLYENNGGGANVVAPGYTK). The helical transmembrane segment at 176–196 (GDGLGAEIVGTFILVYTVFSA) threads the bilayer. The Cytoplasmic segment spans residues 197–209 (TDAKRSARDSHVP). Residues 210–230 (ILAPLPIGFAVFLVHLATIPI) traverse the membrane as a helical segment. At 231 to 258 (TGTGINPARSLGAAIIYNKGHAWDDHWI) the chain is on the extracellular side. The short motif at 236 to 238 (NPA) is the NPA 2 element.

Belongs to the MIP/aquaporin (TC 1.A.8) family. PIP (TC 1.A.8.11) subfamily. As to expression, barely detectable in roots, leaves and fruits.

It is found in the cell membrane. In terms of biological role, water channel required to facilitate the transport of water across cell membrane; mercury-insensitive. Contributes to the tolerance to multiple abiotic stresses including salt (NaCl), cold and water deprivation, by modulating cytosolic K(+)/Na(+) ratio, maintaining osmotic balance, and reducing membrane injury (e.g. oxidative injury). The chain is Aquaporin PIP1-2 from Musa acuminata (Banana).